The following is a 512-amino-acid chain: Retinaldehyde dehydrogenase 3 (512 aa).

The segment at 1-22 is disordered; sequence MATANGAVENGQPDRKPPALPR. Ala2 carries the N-acetylalanine modification. NAD(+)-binding positions include Lys204, Glu207, and 257 to 262; that span reads GSTEVG. Catalysis depends on Glu280, which acts as the Proton acceptor. The active-site Nucleophile is Cys314. NAD(+) contacts are provided by Gln361 and Glu411.

It belongs to the aldehyde dehydrogenase family. Homotetramer. Expressed at low levels in many tissues and at higher levels in salivary gland, stomach, and kidney.

The protein resides in the cytoplasm. It catalyses the reaction all-trans-retinal + NAD(+) + H2O = all-trans-retinoate + NADH + 2 H(+). The catalysed reaction is retinal + NAD(+) + H2O = retinoate + NADH + 2 H(+). The enzyme catalyses all-trans-13,14-dihydroretinal + NAD(+) + H2O = all-trans-13,14-dihydroretinoate + NADH + 2 H(+). It participates in cofactor metabolism; retinol metabolism. Functionally, catalyzes the NAD-dependent oxidation of aldehyde substrates, such as all-trans-retinal and all-trans-13,14-dihydroretinal, to their corresponding carboxylic acids, all-trans-retinoate and all-trans-13,14-dihydroretinoate, respectively. High specificity for all-trans-retinal as substrate, can also accept acetaldehyde as substrate in vitro but with lower affinity. Required for the biosynthesis of normal levels of retinoate in the embryonic ocular and nasal regions; a critical lipid in the embryonic development of the eye and the nasal region. The chain is Retinaldehyde dehydrogenase 3 (ALDH1A3) from Homo sapiens (Human).